A 1062-amino-acid chain; its full sequence is Protein P1-P2 (1062 aa).

Positions Met1–Ala20 are cleaved as a signal peptide. 3 helical membrane passes run Ala121–Ala141, Ile144–Ile164, and Ala172–Trp192. Residues Val207 to Glu399 form the Peptidase S39 domain. Residues His255, Asp286, and Ser354 each act as for protease activity in the active site. Residues Ala455–Arg560 form a disordered region. Residues Thr463–Thr484 are compositionally biased toward polar residues. The segment covering Gln497 to Arg511 has biased composition (basic residues). Residues Gln551–Arg560 are compositionally biased toward basic and acidic residues. In terms of domain architecture, RdRp catalytic spans Glu859 to Lys974.

Specific enzymatic cleavages in vivo yield mature proteins. The protease probably cleaves itself and releases the RdRp (Potential). Cleavages have been shown in the P1 protein, but since the N-terminus containing the serine protease is shared between P1 and P1-P2, cleavages should also occur within the P1-P2 protein.

Its subcellular location is the membrane. It catalyses the reaction RNA(n) + a ribonucleoside 5'-triphosphate = RNA(n+1) + diphosphate. Precursor from which the RNA-dependent RNA polymerase (RdRp) is probably released. RNA-dependent RNA polymerase plays an essential role in virus replication (Potential). The sequence is that of Protein P1-P2 from Potato leafroll virus (strain Potato/Scotland/strain 1/1984) (PLrV).